The chain runs to 299 residues: Probable lipid kinase YegS-like (299 aa).

Positions Glu2–His133 constitute a DAGKc domain. Residues Thr40, Gly66–Glu72, and Thr95 each bind ATP. Mg(2+) contacts are provided by Leu215, Asp218, and Leu220. Glu271 functions as the Proton acceptor in the catalytic mechanism.

This sequence belongs to the diacylglycerol/lipid kinase family. YegS lipid kinase subfamily. Requires Mg(2+) as cofactor. It depends on Ca(2+) as a cofactor.

It is found in the cytoplasm. Probably phosphorylates lipids; the in vivo substrate is unknown. In Pectobacterium atrosepticum (strain SCRI 1043 / ATCC BAA-672) (Erwinia carotovora subsp. atroseptica), this protein is Probable lipid kinase YegS-like.